Reading from the N-terminus, the 483-residue chain is PAT complex subunit CCDC47 (483 aa).

The N-terminal stretch at 1-20 is a signal peptide; that stretch reads MKAFHTFCVVLLVFGSVSEA. The Cytoplasmic segment spans residues 21–135; that stretch reads KFDDFEDEED…PAHLQNSWES (115 aa). The segment at 46 to 118 is disordered; that stretch reads MEDSVTESPQ…PDTSSSKNKD (73 aa). Residues 60 to 104 are compositionally biased toward acidic residues; sequence TEDDEDETTVELEGQDENQEGDFEDADTQEGDTESEPYDDEEFEG. Positions 105-118 are enriched in basic and acidic residues; sequence YEDKPDTSSSKNKD. Residues 136–155 traverse the membrane as a helical segment; that stretch reads YYLEILMVTGLLAYIMNYII. The Lumenal segment spans residues 156–483; it reads GKNKNSRLAQ…KMKQIKVKAM (328 aa). A glycan (N-linked (GlcNAc...) asparagine) is linked at Asn178. A disordered region spans residues 424 to 483; sequence QRQEAAQSRREEKKRAEKERIMNEEDPEKQRRLEEAALRREQKKLEKKQMKMKQIKVKAM. A compositionally biased stretch (basic and acidic residues) spans 430-472; that stretch reads QSRREEKKRAEKERIMNEEDPEKQRRLEEAALRREQKKLEKKQ. The stretch at 450 to 483 forms a coiled coil; it reads PEKQRRLEEAALRREQKKLEKKQMKMKQIKVKAM. Basic residues predominate over residues 473–483; that stretch reads MKMKQIKVKAM.

The protein belongs to the CCDC47 family. As to quaternary structure, component of the PAT complex, composed of WDR83OS/Asterix and CCDC47. The PAT complex is part of the multi-pass translocon (MPT) complex, composed of three subcomplexes, the GEL complex (composed of RAB5IF/OPTI and TMCO1), the BOS complex (composed of NCLN/Nicalin, NOMO and TMEM147) and the PAT complex (composed of WDR83OS/Asterix and CCDC47). The MPT complex associates with the SEC61 complex. Interacts with VCP, HSPA5, DERL1, DERL2 and SELENOS.

Its subcellular location is the endoplasmic reticulum membrane. The protein localises to the rough endoplasmic reticulum membrane. In terms of biological role, component of the multi-pass translocon (MPT) complex that mediates insertion of multi-pass membrane proteins into the lipid bilayer of membranes. The MPT complex takes over after the SEC61 complex: following membrane insertion of the first few transmembrane segments of proteins by the SEC61 complex, the MPT complex occludes the lateral gate of the SEC61 complex to promote insertion of subsequent transmembrane regions. Within the MPT complex, the PAT subcomplex sequesters any highly polar regions in the transmembrane domains away from the non-polar membrane environment until they can be buried in the interior of the fully assembled protein. Within the PAT subcomplex, CCDC47 occludes the lateral gate of the SEC61 complex. Involved in the regulation of calcium ion homeostasis in the ER. Required for proper protein degradation via the ERAD (ER-associated degradation) pathway. Has an essential role in the maintenance of ER organization during embryogenesis. This is PAT complex subunit CCDC47 from Homo sapiens (Human).